The following is a 447-amino-acid chain: Glutamyl-tRNA reductase (447 aa).

Residues 49–52 (TCNR), Ser-109, 114–116 (EQQ), and Gln-120 contribute to the substrate site. Cys-50 serves as the catalytic Nucleophile. 189 to 194 (GAGSMG) is an NADP(+) binding site.

It belongs to the glutamyl-tRNA reductase family. In terms of assembly, homodimer.

The enzyme catalyses (S)-4-amino-5-oxopentanoate + tRNA(Glu) + NADP(+) = L-glutamyl-tRNA(Glu) + NADPH + H(+). It participates in porphyrin-containing compound metabolism; protoporphyrin-IX biosynthesis; 5-aminolevulinate from L-glutamyl-tRNA(Glu): step 1/2. Catalyzes the NADPH-dependent reduction of glutamyl-tRNA(Glu) to glutamate 1-semialdehyde (GSA). The protein is Glutamyl-tRNA reductase of Mycobacterium sp. (strain JLS).